The primary structure comprises 901 residues: Aconitate hydratase A (901 aa).

[4Fe-4S] cluster is bound by residues cysteine 443, cysteine 509, and cysteine 512.

The protein belongs to the aconitase/IPM isomerase family. Monomer. It depends on [4Fe-4S] cluster as a cofactor.

The catalysed reaction is citrate = D-threo-isocitrate. It catalyses the reaction (2S,3R)-3-hydroxybutane-1,2,3-tricarboxylate = 2-methyl-cis-aconitate + H2O. It participates in carbohydrate metabolism; tricarboxylic acid cycle; isocitrate from oxaloacetate: step 2/2. The protein operates within organic acid metabolism; propanoate degradation. Involved in the catabolism of short chain fatty acids (SCFA) via the tricarboxylic acid (TCA)(acetyl degradation route) and probably the 2-methylcitrate cycle I (propionate degradation route). Catalyzes the reversible isomerization of citrate to isocitrate via cis-aconitate. Could catalyze the hydration of 2-methyl-cis-aconitate to yield (2R,3S)-2-methylisocitrate. The apo form of AcnA functions as a RNA-binding regulatory protein. The sequence is that of Aconitate hydratase A (acnA) from Staphylococcus epidermidis (strain ATCC 12228 / FDA PCI 1200).